A 189-amino-acid polypeptide reads, in one-letter code: Small ribosomal subunit protein uS5 (189 aa).

The S5 DRBM domain occupies 27–90 (FEERLLEAAR…EDAKKKTIRV (64 aa)).

Belongs to the universal ribosomal protein uS5 family. In terms of assembly, part of the 30S ribosomal subunit. Contacts proteins S4 and S8.

Functionally, with S4 and S12 plays an important role in translational accuracy. Located at the back of the 30S subunit body where it stabilizes the conformation of the head with respect to the body. This Hydrogenobaculum sp. (strain Y04AAS1) protein is Small ribosomal subunit protein uS5.